A 670-amino-acid chain; its full sequence is Probable plastid-lipid-associated protein 14, chloroplastic (670 aa).

The transit peptide at 1-52 (MALCGVCSTPNLPNLQVFRSVRNSSIGYKRNHSLWQLRSSSFRAKSVIFHCS) directs the protein to the chloroplast. In terms of domain architecture, Protein kinase spans 88 to 399 (FRILDRVSIG…CLDALKHPFL (312 aa)).

Belongs to the PAP/fibrillin family. Not autophosphorylated. As to expression, expressed in roots.

Its subcellular location is the plastid. It is found in the chloroplast. Directly regulated by DOF3.6/OBP3; unknown function. The chain is Probable plastid-lipid-associated protein 14, chloroplastic (PAP14) from Arabidopsis thaliana (Mouse-ear cress).